Here is a 640-residue protein sequence, read N- to C-terminus: ESX-3 secretion system protein EccA3 (640 aa).

Position 393–400 (393–400 (GPPGTGKT)) interacts with ATP.

It belongs to the CbxX/CfxQ family. In terms of assembly, part of the ESX-3 / type VII secretion system (T7SS), which is composed of cytosolic and membrane components.

Its subcellular location is the cytoplasm. Part of an ESX-3 / type VII specialized secretion system (T7SS), which exports several proteins. EccA3 exhibits ATPase activity and may provide energy for the export of ESX-3 substrates. This chain is ESX-3 secretion system protein EccA3, found in Mycobacterium leprae (strain TN).